The sequence spans 324 residues: Phospho-N-acetylmuramoyl-pentapeptide-transferase (324 aa).

A run of 10 helical transmembrane segments spans residues 5–25, 52–72, 77–97, 122–142, 149–169, 176–196, 201–221, 227–247, 253–273, and 302–322; these read GLLVTAGVAFLISVALSPLFI, PTMGGIVIYVSMMVTSLIMAI, LGAEVSLLLLVTFGYGLIGFL, VIAIAFFFIGKGQAFHTYIMI, FELGWAYFVLVLFMLIGGSNA, LDGLLSGTAAIAFGAFSIIAV, FGVAIFCMAVVGAVLGFLVFN, VFMGDTGSLALGGAIAAVAIL, LLVIIGGVFVMETLSVIIQVI, and VVVTFWSVGFLLAVLGIYIGV.

Belongs to the glycosyltransferase 4 family. MraY subfamily. The cofactor is Mg(2+).

Its subcellular location is the cell membrane. The enzyme catalyses UDP-N-acetyl-alpha-D-muramoyl-L-alanyl-gamma-D-glutamyl-meso-2,6-diaminopimeloyl-D-alanyl-D-alanine + di-trans,octa-cis-undecaprenyl phosphate = di-trans,octa-cis-undecaprenyl diphospho-N-acetyl-alpha-D-muramoyl-L-alanyl-D-glutamyl-meso-2,6-diaminopimeloyl-D-alanyl-D-alanine + UMP. Its pathway is cell wall biogenesis; peptidoglycan biosynthesis. Functionally, catalyzes the initial step of the lipid cycle reactions in the biosynthesis of the cell wall peptidoglycan: transfers peptidoglycan precursor phospho-MurNAc-pentapeptide from UDP-MurNAc-pentapeptide onto the lipid carrier undecaprenyl phosphate, yielding undecaprenyl-pyrophosphoryl-MurNAc-pentapeptide, known as lipid I. The polypeptide is Phospho-N-acetylmuramoyl-pentapeptide-transferase (Bacillus anthracis).